A 221-amino-acid chain; its full sequence is Elongation factor Ts (221 aa).

Positions 82–85 (TDFV) are involved in Mg(2+) ion dislocation from EF-Tu.

The protein belongs to the EF-Ts family.

The protein localises to the cytoplasm. Functionally, associates with the EF-Tu.GDP complex and induces the exchange of GDP to GTP. It remains bound to the aminoacyl-tRNA.EF-Tu.GTP complex up to the GTP hydrolysis stage on the ribosome. In Synechococcus elongatus (strain ATCC 33912 / PCC 7942 / FACHB-805) (Anacystis nidulans R2), this protein is Elongation factor Ts.